We begin with the raw amino-acid sequence, 138 residues long: Protein Turandot B (138 aa).

An N-terminal signal peptide occupies residues 1–21 (MNFKTSLICFALLLIGTLCSA).

It belongs to the Turandot family.

It is found in the secreted. In terms of biological role, a humoral factor that may play a role in stress tolerance. The sequence is that of Protein Turandot B from Drosophila melanogaster (Fruit fly).